The following is a 721-amino-acid chain: Ophiobolin F synthase oblA (721 aa).

Positions 5 to 325 are (7Z)-ophiobola-7,19-dien-3-ol synthase; the sequence is YDQPYSVLLD…RYNLKAEWNE (321 aa). Residues Asp-97 and Asp-101 each coordinate Mg(2+). Asp-97 provides a ligand contact to substrate. The DDXXD 1 motif lies at 97–101; that stretch reads DDVID. Residues 185 to 188, Asn-229, 233 to 237, and 316 to 317 each bind substrate; these read RSLD, SFEKE, and RY. The NSE/DTE motif lies at 229-237; it reads NDLFSFEKE. The interval 326–721 is geranylfarnesyl diphosphate synthase; that stretch reads LQMLRAKHGV…LRLMMEMLKV (396 aa). Residues 348–387 form a disordered region; it reads SMDHIWKKGSTQGESKGEKRKRQSVNGTNGVNGTNGVKKP. A compositionally biased stretch (low complexity) spans 372–384; sequence VNGTNGVNGTNGV. Positions 432, 435, and 464 each coordinate isopentenyl diphosphate. Mg(2+) is bound by residues Asp-471 and Asp-475. The DDXXD 2 motif lies at 471 to 475; that stretch reads DDLED. Arg-480 lines the dimethylallyl diphosphate pocket. Arg-481 is an isopentenyl diphosphate binding site. Positions 558, 559, 597, 604, 614, and 624 each coordinate dimethylallyl diphosphate.

It in the N-terminal section; belongs to the terpene synthase family. In the C-terminal section; belongs to the FPP/GGPP synthase family. Mg(2+) is required as a cofactor.

The enzyme catalyses isopentenyl diphosphate + (2E,6E)-farnesyl diphosphate = (2E,6E,10E)-geranylgeranyl diphosphate + diphosphate. The catalysed reaction is isopentenyl diphosphate + (2E,6E,10E)-geranylgeranyl diphosphate = (2E,6E,10E,14E)-geranylfarnesyl diphosphate + diphosphate. It catalyses the reaction (2E,6E,10E,14E)-geranylfarnesyl diphosphate + H2O = ophiobolin F + diphosphate. The protein operates within secondary metabolite biosynthesis; terpenoid biosynthesis. Functionally, bifunctional sesterterpene synthase; part of the gene cluster that mediates the biosynthesis of the sesterterpenes ophiobolins, fungal phytotoxins with potential anti-cancer activities. The first step of the pathway is performed by the sesterterpene synthase oblA that possesses both prenyl transferase and terpene cyclase activity, converting isopentenyl diphosphate and dimethylallyl diphosphate into geranylfarnesyl diphosphate (GFPP) and further converting GFPP into ophiobolin F, respectively. Other sesterterpenoids (C(25) terpenoids) are found as minor products of oblA. The cytochrome P450 monooxygenase oblB then catalyzes a four-step oxidative transformation of ophiobolin F to yield ophiobolin C. The FAD-dependent oxidoreductase oblC might be involved in a later oxidation step that produces ophiobolin A. The sequence is that of Ophiobolin F synthase oblA from Cochliobolus heterostrophus (strain C5 / ATCC 48332 / race O) (Southern corn leaf blight fungus).